A 245-amino-acid polypeptide reads, in one-letter code: DNA repair protein RecO (245 aa).

Belongs to the RecO family.

Its function is as follows. Involved in DNA repair and RecF pathway recombination. This chain is DNA repair protein RecO, found in Klebsiella pneumoniae (strain 342).